The primary structure comprises 445 residues: FAS-associated factor 2 (445 aa).

The UBA domain maps to glutamate 12–glutamate 53. Residues serine 275–glutamate 353 are a coiled coil. A compositionally biased stretch (basic and acidic residues) spans alanine 303–glutamate 348. The disordered stretch occupies residues alanine 303–proline 354. The region spanning aspartate 357 to valine 439 is the UBX domain.

It is found in the cytoplasm. It localises to the lipid droplet. The protein localises to the endoplasmic reticulum. In terms of biological role, plays an important role in endoplasmic reticulum-associated degradation (ERAD) that mediates ubiquitin-dependent degradation of misfolded endoplasmic reticulum proteins. Involved in inhibition of lipid droplet degradation. Involved in stress granule disassembly. This Xenopus tropicalis (Western clawed frog) protein is FAS-associated factor 2 (faf2).